Here is a 173-residue protein sequence, read N- to C-terminus: Fimbrial protein PrsE (173 aa).

A signal peptide spans 1–24; sequence MKKIRGLCLPVMLGAVLMSQHVHA.

Its subcellular location is the secreted. The protein localises to the fimbrium. In terms of biological role, fimbriae (also called pili), polar filaments radiating from the surface of the bacterium to a length of 0.5-1.5 micrometers and numbering 100-300 per cell, enable bacteria to colonize the epithelium of specific host organs. This is Fimbrial protein PrsE (prsE) from Escherichia coli.